A 93-amino-acid chain; its full sequence is Pyrimidine/purine nucleoside phosphorylase (93 aa).

This sequence belongs to the nucleoside phosphorylase PpnP family.

The catalysed reaction is a purine D-ribonucleoside + phosphate = a purine nucleobase + alpha-D-ribose 1-phosphate. It catalyses the reaction adenosine + phosphate = alpha-D-ribose 1-phosphate + adenine. The enzyme catalyses cytidine + phosphate = cytosine + alpha-D-ribose 1-phosphate. It carries out the reaction guanosine + phosphate = alpha-D-ribose 1-phosphate + guanine. The catalysed reaction is inosine + phosphate = alpha-D-ribose 1-phosphate + hypoxanthine. It catalyses the reaction thymidine + phosphate = 2-deoxy-alpha-D-ribose 1-phosphate + thymine. The enzyme catalyses uridine + phosphate = alpha-D-ribose 1-phosphate + uracil. It carries out the reaction xanthosine + phosphate = alpha-D-ribose 1-phosphate + xanthine. In terms of biological role, catalyzes the phosphorolysis of diverse nucleosides, yielding D-ribose 1-phosphate and the respective free bases. Can use uridine, adenosine, guanosine, cytidine, thymidine, inosine and xanthosine as substrates. Also catalyzes the reverse reactions. This is Pyrimidine/purine nucleoside phosphorylase from Magnetococcus marinus (strain ATCC BAA-1437 / JCM 17883 / MC-1).